The sequence spans 300 residues: Transcription initiation factor IIB (300 aa).

A TFIIB-type zinc finger spans residues 3–34; that stretch reads KQRVCPVCGSTEFIYDPERGEIVCARCGYVIE. Residues Cys7, Cys10, Cys26, and Cys29 each contribute to the Zn(2+) site. A run of 2 repeats spans residues 114–197 and 210–291.

This sequence belongs to the TFIIB family.

Its function is as follows. Stabilizes TBP binding to an archaeal box-A promoter. Also responsible for recruiting RNA polymerase II to the pre-initiation complex (DNA-TBP-TFIIB). This is Transcription initiation factor IIB from Pyrococcus abyssi (strain GE5 / Orsay).